The primary structure comprises 394 residues: DNA replication and repair protein RecF (394 aa).

Residue 30–37 coordinates ATP; sequence GSNGQGKT.

This sequence belongs to the RecF family.

Its subcellular location is the cytoplasm. Its function is as follows. The RecF protein is involved in DNA metabolism; it is required for DNA replication and normal SOS inducibility. RecF binds preferentially to single-stranded, linear DNA. It also seems to bind ATP. In Cutibacterium acnes (strain DSM 16379 / KPA171202) (Propionibacterium acnes), this protein is DNA replication and repair protein RecF.